A 558-amino-acid chain; its full sequence is Zinc finger protein piragua (558 aa).

One can recognise a ZAD domain in the interval 15-94 (STCRLCHHNT…QEREQSLQEQ (80 aa)). Positions 17, 20, 67, and 70 each coordinate Zn(2+). The span at 132–177 (LAESSEEEFALGSDGEYENYDDDDEEEEEDYDEEDEEDGQNGEDVD) shows a compositional bias: acidic residues. A disordered region spans residues 132–178 (LAESSEEEFALGSDGEYENYDDDDEEEEEDYDEEDEEDGQNGEDVDM). C2H2-type zinc fingers lie at residues 208–231 (FLCQ…LAAH), 237–260 (YCCN…KTLH), 266–288 (YVCA…TIVH), 294–316 (FTCN…MRIH), 322–344 (FVCQ…TRSH), 350–372 (FQCG…QQVH), 414–436 (YHCD…QALH), 441–464 (FACK…LEAH), and 468–490 (FTCG…LKVH).

In terms of biological role, may be involved in transcriptional regulation. The function of this protein is unclear. According to one report, it is required for development and viability since mutants display defects in several developmental morphogenetic processes including dorsal closure and head involution, and die by the first instar larval stage. It may also be involved in fwe-mediated cellular competition. However, according to another report, it is not required for development or viability since mutants have no visible phenotype and are fertile. This Drosophila melanogaster (Fruit fly) protein is Zinc finger protein piragua.